The primary structure comprises 214 residues: tRNA (guanine-N(7)-)-methyltransferase (214 aa).

4 residues coordinate S-adenosyl-L-methionine: Glu44, Glu69, Asp96, and Asp118. Residue Asp118 is part of the active site. Residues Lys122, Asp154, and 191 to 194 (TEYE) each bind substrate.

The protein belongs to the class I-like SAM-binding methyltransferase superfamily. TrmB family.

It carries out the reaction guanosine(46) in tRNA + S-adenosyl-L-methionine = N(7)-methylguanosine(46) in tRNA + S-adenosyl-L-homocysteine. It functions in the pathway tRNA modification; N(7)-methylguanine-tRNA biosynthesis. Functionally, catalyzes the formation of N(7)-methylguanine at position 46 (m7G46) in tRNA. This is tRNA (guanine-N(7)-)-methyltransferase from Listeria monocytogenes serotype 4b (strain F2365).